Consider the following 98-residue polypeptide: MPLIYMNITLAFAISLLGMLIYRSHLMSSLLCLEGMMLSLFIMSTLMALNTHSLLINIMPVVLLVFAACEAAVGLALLVSISNTYGLDHIHNLNLLQC.

The next 3 helical transmembrane spans lie at 1–21 (MPLIYMNITLAFAISLLGMLI), 29–49 (SLLCLEGMMLSLFIMSTLMAL), and 61–81 (VVLLVFAACEAAVGLALLVSI).

This sequence belongs to the complex I subunit 4L family. In terms of assembly, core subunit of respiratory chain NADH dehydrogenase (Complex I) which is composed of 45 different subunits.

The protein localises to the mitochondrion inner membrane. It carries out the reaction a ubiquinone + NADH + 5 H(+)(in) = a ubiquinol + NAD(+) + 4 H(+)(out). Core subunit of the mitochondrial membrane respiratory chain NADH dehydrogenase (Complex I) which catalyzes electron transfer from NADH through the respiratory chain, using ubiquinone as an electron acceptor. Part of the enzyme membrane arm which is embedded in the lipid bilayer and involved in proton translocation. This is NADH-ubiquinone oxidoreductase chain 4L (MT-ND4L) from Hylobates lar (Lar gibbon).